Reading from the N-terminus, the 112-residue chain is ATP synthase subunit c (112 aa).

The next 2 membrane-spanning stretches (helical) occupy residues Phe36–Met56 and Met81–Ile101.

The protein belongs to the ATPase C chain family. In terms of assembly, F-type ATPases have 2 components, F(1) - the catalytic core - and F(0) - the membrane proton channel. F(1) has five subunits: alpha(3), beta(3), gamma(1), delta(1), epsilon(1). F(0) has three main subunits: a(1), b(2) and c(10-14). The alpha and beta chains form an alternating ring which encloses part of the gamma chain. F(1) is attached to F(0) by a central stalk formed by the gamma and epsilon chains, while a peripheral stalk is formed by the delta and b chains.

The protein resides in the cell inner membrane. In terms of biological role, f(1)F(0) ATP synthase produces ATP from ADP in the presence of a proton or sodium gradient. F-type ATPases consist of two structural domains, F(1) containing the extramembraneous catalytic core and F(0) containing the membrane proton channel, linked together by a central stalk and a peripheral stalk. During catalysis, ATP synthesis in the catalytic domain of F(1) is coupled via a rotary mechanism of the central stalk subunits to proton translocation. Functionally, key component of the F(0) channel; it plays a direct role in translocation across the membrane. A homomeric c-ring of between 10-14 subunits forms the central stalk rotor element with the F(1) delta and epsilon subunits. This Campylobacter jejuni (strain RM1221) protein is ATP synthase subunit c.